The chain runs to 417 residues: DNA primase small subunit (417 aa).

Methionine 1 carries the N-acetylmethionine modification. Residues glutamate 44, aspartate 109, and aspartate 111 contribute to the active site. Residues aspartate 109 and aspartate 111 each coordinate Mg(2+). The Mn(2+) site is built by aspartate 109 and aspartate 111. 109 to 111 (DID) is a binding site for a ribonucleoside 5'-triphosphate. Zn(2+) contacts are provided by cysteine 121, cysteine 122, cysteine 128, and cysteine 131. Positions 121-131 (CCSSADICSKC) match the Zinc knuckle motif motif. 160–166 (SGRRGVH) lines the a ribonucleoside 5'-triphosphate pocket. Residue aspartate 305 coordinates Mg(2+). Residue aspartate 305 coordinates Mn(2+). A ribonucleoside 5'-triphosphate contacts are provided by residues 314–317 (HLLK) and histidine 323.

The protein belongs to the eukaryotic-type primase small subunit family. Heterodimer of a catalytic subunit PRIM1 and a regulatory subunit PRIM2, also known as the DNA primase complex. Interacts with PRIM2/p58 (via C-terminus). Component of the alpha DNA polymerase complex (also known as the alpha DNA polymerase-primase complex) consisting of four subunits: the catalytic subunit POLA1, the regulatory subunit POLA2, and the primase complex subunits PRIM1 and PRIM2 respectively. Within the complex, POLA1 directly interacts with PRIM2. It depends on Mg(2+) as a cofactor. The cofactor is Mn(2+).

It catalyses the reaction ssDNA + n NTP = ssDNA/pppN(pN)n-1 hybrid + (n-1) diphosphate.. Its activity is regulated as follows. The presence of the regulatory subunit PRIM2/p58 accelerates the kinetics of initiation and primer extension. Its function is as follows. Catalytic subunit of the DNA primase complex and component of the DNA polymerase alpha complex (also known as the alpha DNA polymerase-primase complex) which play an essential role in the initiation of DNA synthesis. During the S phase of the cell cycle, the DNA polymerase alpha complex (composed of a catalytic subunit POLA1, an accessory subunit POLA2 and two primase subunits, the catalytic subunit PRIM1 and the regulatory subunit PRIM2) is recruited to DNA at the replicative forks via direct interactions with MCM10 and WDHD1. The primase subunit of the polymerase alpha complex initiates DNA synthesis by oligomerising short RNA primers on both leading and lagging strands. These primers are initially extended by the polymerase alpha catalytic subunit and subsequently transferred to polymerase delta and polymerase epsilon for processive synthesis on the lagging and leading strand, respectively. In the primase complex, both subunits are necessary for the initial di-nucleotide formation, but the extension of the primer depends only on the catalytic subunit. Can add both ribo- and deoxynucleotides during elongation of the primers. Synthesizes 9-mer RNA primers (also known as the 'unit length' RNA primers). Incorporates only ribonucleotides in the presence of ribo- and deoxy-nucleotide triphosphates (rNTPs, dNTPs). Requires template thymine or cytidine to start the RNA primer synthesis, with an adenine or guanine at its 5'-end. Binds single stranded DNA. This Mus musculus (Mouse) protein is DNA primase small subunit (Prim1).